We begin with the raw amino-acid sequence, 1383 residues long: MDEGVNLVFHKKVIDGTAIKRLISRLIDHFGMAHTSHILDQVKTLGFQQATATSISLGIDDLLTIPSKGWLVQDAEQQSLSLEKHHHYGNVHAVEKLRQSIEVWYATSEYLRQEMNPNFRMTDPFNPVHIMSFSGARGNASQVHQLVGMRGLMSDPQGQMIDLPIQSNLREGLSLTEYIISCYGARKGVVDTAVRTSDAGYLTRRLVEVVQHIVVRRTDCGTLRGISVSPRRMPERIFIQTLIGRVLADDIYIGSRCIAIRNQDIGIGLVNRFITFRIQPISIRTPFTCRSTSWICRLCYGRSPTHGDLVELGEAVGIIAGQSIGEPGTQLTLRTFHTGGVFTGGTAEHVRAPSNGKIKFNFNEALVHPARTRHGHPALLCSMDLDVTIESEDILHNLTIPPKSFLLVQNNQYVESEQVIAEICAGTSTFHFKERVRKHIYSDSEGEMHWSTDVYHAPEFTYSNVHLLPKTSHLWILSGGSCRSRGAPFSLHKDQDQMNPRSTERERRYLSSLSANNDQIRYKFFSSSFSGKKKDDRSPGYSEMNRIICTLHCNLIYPSILRENSDLLAKRRRNRLVIPVQSSQEREKELIPHSGISIELPINGIFRKKSILAFFDDPRYRTKSSGITQYETMGMHSIVKKEGLVDYRGINEFKPKYQMTIDRFFFIPEEVHILPESSSIMVRNNSLIGVDTRIALNTRSRAGGLVRVERKKRGIALQIFSGTIHFPGETDKISWDSGILIPPGTGKINSKESKKWKNGIYVQRITPTKKKHFVLFRPVVTYEIADGLNLARLFPPDLCQEKDNMQLQIVNYIVYGNGKPIREISDTSIQLVRTWFILNWDQDKKSASAEAAHASFVEVRAKGLIRDFLRIDLVKSPILDPRKRNDPSGSGLISDNVSDHTNINPFYSKPKMKQSPRQNHGTIRTLLNQNKECPSLMILSASNCFRMGPFNDVKSQNVIKESIKKDAIIQIRNSIGPLGTALQVVNFDSFYYFITHNQVLLTKYLQVENLKQTFQVLQYYLMDESGRIYNPDPRSNIVLNSFNLSWYFLPHNNYENSCEEISTIVSLGQFICENGCIAKNGPYLRSGQVLIVQLDSVVIRSAKPYLATPGATVHGHYGEILYDGDTVVTFLYEKSRSGDITQGLPKVEQVLEVRSVDSISVNLEKRVENWNEHITRILGFPWGFLIGAELTIVQSRISLVNKIQKVYRSQGVQIHNRHIEIIVRQITSKVLVSEDGMSNVFLPRELIGLLRAERTGRALEESICYKAFLLGITRTSLNTQSFISEASFQETARVLAKAALRGRIDWLKGLKENVVIGGMIPVGTGFKGLVHCSKQHKSIPKNKHFFEGEIRDILFHHRELFDSCISKNFHDTPEQSFRVFNDS.

The Zn(2+) site is built by C220, C289, C296, and C299.

This sequence belongs to the RNA polymerase beta' chain family. RpoC2 subfamily. As to quaternary structure, in plastids the minimal PEP RNA polymerase catalytic core is composed of four subunits: alpha, beta, beta', and beta''. When a (nuclear-encoded) sigma factor is associated with the core the holoenzyme is formed, which can initiate transcription. It depends on Zn(2+) as a cofactor.

The protein resides in the plastid. The protein localises to the chloroplast. It catalyses the reaction RNA(n) + a ribonucleoside 5'-triphosphate = RNA(n+1) + diphosphate. In terms of biological role, DNA-dependent RNA polymerase catalyzes the transcription of DNA into RNA using the four ribonucleoside triphosphates as substrates. The sequence is that of DNA-directed RNA polymerase subunit beta'' from Oenothera biennis (German evening primrose).